Here is a 155-residue protein sequence, read N- to C-terminus: Nuclear cap-binding protein subunit 2 (155 aa).

MRNA-binding positions include Tyr19, Tyr42, 111–115, 122–126, and 132–133; these read RTDWD, RQYGR, and QV. In terms of domain architecture, RRM spans 39–117; sequence NTLYVGNLSF…RIIRTDWDAG (79 aa). The interval 122–155 is disordered; it reads RQYGRGKSGGQVRDEYRQDYDPARGGYGKVVSRP. A compositionally biased stretch (basic and acidic residues) spans 133 to 143; that stretch reads VRDEYRQDYDP.

The protein belongs to the RRM NCBP2 family. In terms of assembly, component of the nuclear cap-binding complex (CBC), a heterodimer composed of ncbp1/cbp80 and ncbp2/cbp20 that interacts with m7GpppG-capped RNA.

The protein resides in the nucleus. Its subcellular location is the cytoplasm. In terms of biological role, component of the cap-binding complex (CBC), which binds co-transcriptionally to the 5' cap of pre-mRNAs and is involved in various processes such as pre-mRNA splicing, translation regulation, nonsense-mediated mRNA decay, RNA-mediated gene silencing (RNAi) by microRNAs (miRNAs) and mRNA export. The CBC complex is involved in mRNA export from the nucleus, leading to the recruitment of the mRNA export machinery to the 5' end of mRNA and to mRNA export in a 5' to 3' direction through the nuclear pore. The CBC complex is also involved in mediating U snRNA and intronless mRNAs export from the nucleus. The CBC complex is essential for a pioneer round of mRNA translation, before steady state translation when the CBC complex is replaced by cytoplasmic cap-binding protein eIF4E. The pioneer round of mRNA translation mediated by the CBC complex plays a central role in nonsense-mediated mRNA decay (NMD), NMD only taking place in mRNAs bound to the CBC complex, but not on eIF4E-bound mRNAs. The CBC complex enhances NMD in mRNAs containing at least one exon-junction complex (EJC), promoting the interaction between upf1 and upf2. The CBC complex is also involved in 'failsafe' NMD, which is independent of the EJC complex, while it does not participate in Staufen-mediated mRNA decay (SMD). During cell proliferation, the CBC complex is also involved in microRNAs (miRNAs) biogenesis via its interaction with srrt/ars2, thereby being required for miRNA-mediated RNA interference. The CBC complex also acts as a negative regulator of parn, thereby acting as an inhibitor of mRNA deadenylation. In the CBC complex, ncbp2/cbp20 recognizes and binds capped RNAs (m7GpppG-capped RNA) but requires ncbp1/cbp80 to stabilize the movement of its N-terminal loop and lock the CBC into a high affinity cap-binding state with the cap structure. The conventional cap-binding complex with NCBP2 binds both small nuclear RNA (snRNA) and messenger (mRNA) and is involved in their export from the nucleus. This Salmo salar (Atlantic salmon) protein is Nuclear cap-binding protein subunit 2 (ncbp2).